The following is a 620-amino-acid chain: Somatic embryogenesis receptor kinase 4 (620 aa).

Residues 1–33 form the signal peptide; it reads MTSSKMEQRSLLCFLYLLLLFNFTLRVAGNAEG. Over 34-234 the chain is Extracellular; it reads DALTQLKNSL…GGQMTAAIAG (201 aa). 5 LRR repeats span residues 100-122, 124-146, 148-170, 171-193, and 194-215; these read NLQY…LGDL, ELVS…LGKL, KLRF…LTSV, QLQV…GSFS, and LFTP…PPTS. Asparagine 110 is a glycosylation site (N-linked (GlcNAc...) asparagine). N-linked (GlcNAc...) asparagine glycosylation is found at asparagine 156, asparagine 189, and asparagine 202. Residues 205 to 227 form a disordered region; that stretch reads LTDLPEPPPTSTSPTPPPPSGGQ. Residues 209 to 224 show a composition bias toward pro residues; it reads PEPPPTSTSPTPPPPS. Residues 235 to 255 traverse the membrane as a helical segment; it reads GVAAGAALLFAVPAIAFAWWL. The Cytoplasmic portion of the chain corresponds to 256–620; sequence RRKPQDHFFD…IENDYPSGPR (365 aa). Threonine 291 is modified (phosphothreonine). Residues 294-591 enclose the Protein kinase domain; the sequence is FSNKNVLGRG…KEEMPIHDFN (298 aa). The residue at position 295 (serine 295) is a Phosphoserine. ATP contacts are provided by residues 300-308 and lysine 322; that span reads LGRGGFGKV. Serine 375 and serine 378 each carry phosphoserine. Aspartate 421 (proton acceptor) is an active-site residue. A phosphothreonine mark is found at threonine 454, threonine 455, and threonine 460. Position 468 is a phosphotyrosine (tyrosine 468). A Phosphoserine modification is found at serine 470. At threonine 471 the chain carries Phosphothreonine. Residue serine 475 is modified to Phosphoserine. Threonine 551 carries the post-translational modification Phosphothreonine.

This sequence belongs to the protein kinase superfamily. Ser/Thr protein kinase family. As to quaternary structure, interacts with the EF-Tu receptor EFR and FLS2 in a specific ligand-induced manner. Interacts with TMK4/BARK1. Interacts with ERECTA in a EPF2-induced manner. Interacts with ERL1 in a EPF1-induced manner. Interacts with TMM. Forms a complex with MIK2 in response to SCOOP12 perception. Post-translationally, autophosphorylated on Thr and Tyr residues.

The protein resides in the cell membrane. The enzyme catalyses L-seryl-[protein] + ATP = O-phospho-L-seryl-[protein] + ADP + H(+). The catalysed reaction is L-threonyl-[protein] + ATP = O-phospho-L-threonyl-[protein] + ADP + H(+). It carries out the reaction L-tyrosyl-[protein] + ATP = O-phospho-L-tyrosyl-[protein] + ADP + H(+). Functionally, dual specificity kinase acting on both serine/threonine- and tyrosine-containing substrates. Positively regulates the BR-dependent plant growth pathway and negatively regulates the BR-independent cell-death pathway. Required during SCOOP small peptides (e.g. SCOOP10 and SCOOP12) perception and signaling; associates with MIK2 as a coreceptor upon MIK2 perception of SCOOP peptides, and relays the signaling through the activation of receptor-like cytosolic kinases (RLCKs) BIK1 and PBL1. This chain is Somatic embryogenesis receptor kinase 4, found in Arabidopsis thaliana (Mouse-ear cress).